Here is a 408-residue protein sequence, read N- to C-terminus: MELSSACNLSLKPNYYYYPTSLFPSNNSYNNLKASSYYQTQRPIKCCSYSPSKYCSTKKLQTTHLLGLYAKHKCLKPFSIGHLPRPNSLTAWSHQSEFPSTIVTKGSNFGHASWKFVRPIPFVAVSIICTSLFGAELLKNPNLFSWQLMFDAFQGLVVILLYHIYINGLNQIYDLESDRINKPDLPLAAEEMSVKSAWFLTIFSAVASLLLMIKLKCGLFLTCMYCCYLVIGAMYSVPPFRWKMNTFTSTLWNFSEIGIGINFLINYASRATLGLPFQWRPPFTFIIGFVSTLSIILSILKDVPDVEGDKKVGMSTLPVIFGARTIVLVGSGFFLLNYVAAIGVAIMWPQAFKGYIMIPAHAIFASALIFKTWLLDKANYAKEASDSYYHFLWFLMIAEYILYPFIST.

A chloroplast-targeting transit peptide spans 1–46 (MELSSACNLSLKPNYYYYPTSLFPSNNSYNNLKASSYYQTQRPIKC). A run of 9 helical transmembrane segments spans residues 119–139 (PIPFVAVSIICTSLFGAELLK), 146–166 (WQLMFDAFQGLVVILLYHIYI), 193–213 (SVKSAWFLTIFSAVASLLLMI), 217–237 (CGLFLTCMYCCYLVIGAMYSV), 257–277 (IGIGINFLINYASRATLGLPF), 281–301 (PPFTFIIGFVSTLSIILSILK), 326–346 (IVLVGSGFFLLNYVAAIGVAI), 355–375 (YIMIPAHAIFASALIFKTWLL), and 388–408 (YYHFLWFLMIAEYILYPFIST).

This sequence belongs to the UbiA prenyltransferase family. As to quaternary structure, homo- and heteromer. Interacts with PT1L, forming a functional metabolon. The cofactor is Mg(2+). In terms of tissue distribution, expressed in trichomes.

The protein resides in the plastid. It is found in the chloroplast membrane. It catalyses the reaction a 2-acyl-4-prenylphloroglucinol + dimethylallyl diphosphate = a 2-acyl-4,6-diprenylphloroglucinol + diphosphate. It carries out the reaction a 2-acyl-4,6-diprenylphloroglucinol + dimethylallyl diphosphate = a 2-acyl-4,6,6-triprenylphloroglucinol + diphosphate. It participates in secondary metabolite biosynthesis. Functionally, involved in the biosynthesis of prenylated phenolics natural products which contribute to the bitter taste of beer and display broad biological activities. Catalyzes the two last prenylation steps in the beta-bitter acid pathway. Uses dimethylallyl diphosphate (DMAPP) as the prenyl donor. The sequence is that of 2-acyl-4-prenylphloroglucinol 6-prenyltransferase, chloroplastic from Humulus lupulus (European hop).